The chain runs to 312 residues: Beta-lactamase regulatory protein BlaB (312 aa).

This is Beta-lactamase regulatory protein BlaB (blaB) from Streptomyces cacaoi.